Consider the following 245-residue polypeptide: MKRVAAVIEYDGSNFFGYQGQPDVRTVQGVIEDALERIFKQRIYTQAAGRTDAGVHANGQLIAFNCPNDRMTTEDIKNAMNANLPDDVYVKEVFEVSKNFHPRFDVKKRIYHYFILTSKQKNVFLRKYVWWFPYELDLDAMRKAAKYLEGTHDFTSFKTGSDERDPVRTIYRIRILRLKNDLVLIRVEGRSFLRRMVRNIVAALVKVGLKQWEPEKMKEVLEARDRSAAAGTAPAHGLYFYKVLF.

The Nucleophile role is filled by D52. Y111 contacts substrate.

Belongs to the tRNA pseudouridine synthase TruA family. In terms of assembly, homodimer.

The enzyme catalyses uridine(38/39/40) in tRNA = pseudouridine(38/39/40) in tRNA. In terms of biological role, formation of pseudouridine at positions 38, 39 and 40 in the anticodon stem and loop of transfer RNAs. The polypeptide is tRNA pseudouridine synthase A (Thermotoga sp. (strain RQ2)).